Consider the following 171-residue polypeptide: Protein ups1 homolog (171 aa).

Positions 1 to 79 are required for mitochondrial targeting; sequence MTAICTDKTE…LNVNKSYILE (79 aa). One can recognise a PRELI/MSF1 domain in the interval 2-171; the sequence is TAICTDKTEL…YVIQQKFQPS (170 aa).

Its subcellular location is the mitochondrion inner membrane. It localises to the mitochondrion intermembrane space. Functionally, required for maintenance of normal mitochondrial morphology as well as PCP1-dependent processing of MGM1. This is Protein ups1 homolog from Schizosaccharomyces pombe (strain 972 / ATCC 24843) (Fission yeast).